The primary structure comprises 187 residues: Elongation factor P (187 aa).

The protein belongs to the elongation factor P family.

It localises to the cytoplasm. It participates in protein biosynthesis; polypeptide chain elongation. Involved in peptide bond synthesis. Stimulates efficient translation and peptide-bond synthesis on native or reconstituted 70S ribosomes in vitro. Probably functions indirectly by altering the affinity of the ribosome for aminoacyl-tRNA, thus increasing their reactivity as acceptors for peptidyl transferase. This chain is Elongation factor P, found in Frankia casuarinae (strain DSM 45818 / CECT 9043 / HFP020203 / CcI3).